The primary structure comprises 359 residues: Type II restriction enzyme HgiDI (359 aa).

It carries out the reaction Endonucleolytic cleavage of DNA to give specific double-stranded fragments with terminal 5'-phosphates.. Functionally, a P subtype restriction enzyme that recognizes the double-stranded sequence 5'-GRCGYC-3' and cleaves after R-2. The polypeptide is Type II restriction enzyme HgiDI (Herpetosiphon aurantiacus (Herpetosiphon giganteus)).